The following is a 298-amino-acid chain: Thymidylate synthase (298 aa).

DUMP-binding positions include Arg25 and 159-160; that span reads RR. The active-site Nucleophile is the Cys179. DUMP is bound by residues 200 to 203, Asn211, and 241 to 243; these read RSVD and HLY. Asp203 is a binding site for (6R)-5,10-methylene-5,6,7,8-tetrahydrofolate. Residue Ala297 coordinates (6R)-5,10-methylene-5,6,7,8-tetrahydrofolate.

The protein belongs to the thymidylate synthase family. Bacterial-type ThyA subfamily. As to quaternary structure, homodimer.

It localises to the cytoplasm. It carries out the reaction dUMP + (6R)-5,10-methylene-5,6,7,8-tetrahydrofolate = 7,8-dihydrofolate + dTMP. It functions in the pathway pyrimidine metabolism; dTTP biosynthesis. Functionally, catalyzes the reductive methylation of 2'-deoxyuridine-5'-monophosphate (dUMP) to 2'-deoxythymidine-5'-monophosphate (dTMP) while utilizing 5,10-methylenetetrahydrofolate (mTHF) as the methyl donor and reductant in the reaction, yielding dihydrofolate (DHF) as a by-product. This enzymatic reaction provides an intracellular de novo source of dTMP, an essential precursor for DNA biosynthesis. This chain is Thymidylate synthase, found in Cereibacter sphaeroides (strain ATCC 17025 / ATH 2.4.3) (Rhodobacter sphaeroides).